The sequence spans 161 residues: Urease accessory protein UreE (161 aa).

Belongs to the UreE family. As to quaternary structure, homodimer.

The protein resides in the cytoplasm. Functionally, involved in urease metallocenter assembly. Binds nickel. Probably functions as a nickel donor during metallocenter assembly. It is not essential for urease activity. This chain is Urease accessory protein UreE, found in Proteus mirabilis (strain HI4320).